The primary structure comprises 416 residues: Probable glucan 1,3-beta-glucosidase A (416 aa).

The first 22 residues, 1–22 (MIFKFSQKALVALYLVVGLAEA), serve as a signal peptide directing secretion. Residue Glu211 is the Proton donor of the active site. Cystine bridges form between Cys291–Cys415 and Cys316–Cys342. Glu308 (nucleophile) is an active-site residue. N-linked (GlcNAc...) asparagine glycosylation occurs at Asn344.

The protein belongs to the glycosyl hydrolase 5 (cellulase A) family. In terms of assembly, monomer. The cofactor is Mn(2+).

The protein localises to the secreted. It catalyses the reaction Successive hydrolysis of beta-D-glucose units from the non-reducing ends of (1-&gt;3)-beta-D-glucans, releasing alpha-glucose.. In terms of biological role, beta-glucanases participate in the metabolism of beta-glucan, the main structural component of the cell wall. It could also function biosynthetically as a transglycosylase. This Aspergillus fumigatus (strain CBS 144.89 / FGSC A1163 / CEA10) (Neosartorya fumigata) protein is Probable glucan 1,3-beta-glucosidase A (exgA).